We begin with the raw amino-acid sequence, 254 residues long: MKIGIFDSGAGGMTVLKAIREAYPNVDVVYLGDTARVPYGIRSKETIVRYSKECANFLKDKGVDLLVVACNTASAYALEELKREFPFPVFGVIEPGVKEALRKSKTKRIGVIGTQATIKSGAYQEALKRAGAEVYSKACPLFVPLVEEGMIEGEIPKKVVEHYLKDFKGKVDTLILGCTHYPLLKREIQNFLEGVNVIDSSRATAKSLKDFVKNEGSGSLELYFTDRSQNLERLIKLILGEEVEPKITSEVFVL.

Substrate contacts are provided by residues Asp7–Ser8 and Tyr39–Gly40. Residue Cys70 is the Proton donor/acceptor of the active site. Residue Asn71 to Thr72 coordinates substrate. Cys178 acts as the Proton donor/acceptor in catalysis. Thr179–His180 is a binding site for substrate.

This sequence belongs to the aspartate/glutamate racemases family.

The enzyme catalyses L-glutamate = D-glutamate. It participates in cell wall biogenesis; peptidoglycan biosynthesis. Provides the (R)-glutamate required for cell wall biosynthesis. This chain is Glutamate racemase, found in Aquifex aeolicus (strain VF5).